Consider the following 748-residue polypeptide: Elongation factor G, mitochondrial (748 aa).

The N-terminal 14 residues, 1 to 14, are a transit peptide targeting the mitochondrion; sequence MTISSFLRVRHSLA. The tr-type G domain maps to 40–318; that stretch reads ERIRNIGISA…VLNYLPHPGE (279 aa). Residues 49–56, 116–120, and 170–173 each bind GTP; these read AHIDSGKT, DTPGH, and NKLD.

It belongs to the TRAFAC class translation factor GTPase superfamily. Classic translation factor GTPase family. EF-G/EF-2 subfamily.

The protein resides in the mitochondrion. It functions in the pathway protein biosynthesis; polypeptide chain elongation. Functionally, mitochondrial GTPase that catalyzes the GTP-dependent ribosomal translocation step during translation elongation. During this step, the ribosome changes from the pre-translocational (PRE) to the post-translocational (POST) state as the newly formed A-site-bound peptidyl-tRNA and P-site-bound deacylated tRNA move to the P and E sites, respectively. Catalyzes the coordinated movement of the two tRNA molecules, the mRNA and conformational changes in the ribosome. The protein is Elongation factor G, mitochondrial of Aedes aegypti (Yellowfever mosquito).